The primary structure comprises 773 residues: Circadian clock protein PASD1 (773 aa).

The PAS domain occupies 30–102; the sequence is YDYFNQVTLQ…IILKFPLLNS (73 aa). Residues 313 to 361 form a disordered region; the sequence is SVDQEGPMDQQDPENPVAPLDQAGLMDPVDPEDSVDLGAAGASAQPLQP. The segment at 365 to 412 is necessary for transcriptional repression; that stretch reads VAYDIISQELELMKKLKEQLEERTWLLHDAIQNQQNALELMMDHLQKQ. Residues 365–412 are a coiled coil; it reads VAYDIISQELELMKKLKEQLEERTWLLHDAIQNQQNALELMMDHLQKQ. 3 disordered regions span residues 427–448, 506–569, and 732–773; these read SEAV…PLPH, QRKV…QLQE, and GVEG…NKPC. Residues 475–553 adopt a coiled-coil conformation; sequence VAFNQQQLVQ…QERKKWQGQM (79 aa). Basic and acidic residues predominate over residues 506–536; that stretch reads QRKVQKQKKMQEKKKLQEQKMQEKKKLQEQR.

As to quaternary structure, interacts with the CLOCK-BMAL1 heterodimer; this interaction inhibits CLOCK-BMAL1 transcriptional activation and suppress circadian timekeeping. Interacts with BMAL1. Testis-specific. Expressed in a broad range of cancer cells, including melanoma, lung cancer, and breast cancer (at protein level). Testis-specific. Found in histologically normal tissues from patients with uterus, lung and small intestine cancers. Widespread expression seen in solid tumors and diffuse large B-cell lymphoma (DLBCL)-derived cell lines. Isoform 2 is expressed in all DLBCL-derived cell lines, while isoform 1 is preferentially expressed in cell lines derived from non-germinal center DLBCL.

The protein resides in the nucleus. Its function is as follows. Functions as a suppressor of the biological clock that drives the daily circadian rhythms of cells throughout the body. Acts as a nuclear repressor of the CLOCK-BMAL1 heterodimer-mediated transcriptional activation of the core clock components. Inhibits circadian clock function in cancer cells, when overexpressed. The polypeptide is Circadian clock protein PASD1 (Homo sapiens (Human)).